The sequence spans 397 residues: Yellow-related salivary protein LJM111 (397 aa).

Positions 1-18 are cleaved as a signal peptide; the sequence is MKLFFFLYTFGLVQTIFG.

The protein belongs to the major royal jelly protein family. As to expression, salivary gland (at protein level).

It is found in the secreted. Functionally, probably modulates blood feeding of sand flies on vertebrate species by binding and sequestering different mediators involved in the host response. Binds biogenic amines. Binds adrenaline and noradrenaline with high affinity. Binds serotonin. Binds dopamine and octopamine. Exhibits anti-inflammatory effects in the host: reduces IL17A, TNF-alpha (TNF) and IFN-gamma (IFNG) production by host lymph node cells, suppresses expression of MHC-II and CD86, reduces TNF-alpha production and increases IL10 production, in host bone marrow-derived dendritic cells (BMDCs) stimulated by lipopolysaccharides. Reduces pain in mouse mechanical hypernociception model. The polypeptide is Yellow-related salivary protein LJM111 (Lutzomyia longipalpis (Sand fly)).